A 318-amino-acid chain; its full sequence is Oncosphere antigen A (318 aa).

3 Fibronectin type-III domains span residues 6–103 (IPQN…TPLP), 109–207 (KPSF…ISRA), and 211–308 (VPQN…TPSV).

This chain is Oncosphere antigen A (ONCA), found in Hydatigena taeniaeformis (Feline tapeworm).